Reading from the N-terminus, the 706-residue chain is Triadin (706 aa).

The tract at residues M1–P28 is disordered. Residues M1–P47 are Cytoplasmic-facing. Residues G8–V24 show a composition bias toward polar residues. A helical transmembrane segment spans residues A48–F68. The Lumenal segment spans residues D69 to Q706. Residue N75 is glycosylated (N-linked (GlcNAc...) asparagine). Positions D117–E127 are enriched in acidic residues. 3 disordered regions span residues D117–D265, D281–K663, and F684–Q706. Basic and acidic residues-rich tracts occupy residues D128–E254, P309–D358, T372–V432, A443–P518, I525–L552, K570–K588, and E599–H621. N625 carries an N-linked (GlcNAc...) asparagine glycan. A compositionally biased stretch (basic and acidic residues) spans K628–E651.

In terms of assembly, interacts with CASQ2. Homooligomer of variable subunit number; disulfide-linked. Interacts with CASQ1 and RYR1 in skeletal muscle. In terms of processing, phosphorylated by CaMK2. N-glycosylated. Detected in skeletal muscle and in heart (at protein level). Detected in skeletal muscle and in heart.

It localises to the sarcoplasmic reticulum membrane. Functionally, contributes to the regulation of lumenal Ca2+ release via the sarcoplasmic reticulum calcium release channels RYR1 and RYR2, a key step in triggering skeletal and heart muscle contraction. Required for normal organization of the triad junction, where T-tubules and the sarcoplasmic reticulum terminal cisternae are in close contact. Required for normal skeletal muscle strength. Plays a role in excitation-contraction coupling in the heart and in regulating the rate of heart beats. This chain is Triadin (TRDN), found in Oryctolagus cuniculus (Rabbit).